A 318-amino-acid polypeptide reads, in one-letter code: NAC domain-containing protein 59 (318 aa).

One can recognise an NAC domain in the interval 24 to 174 (LPPGFRFHPT…ECVISRVFHT (151 aa)). A DNA-binding region spans residues 121 to 180 (VGMKKTLVFYKGRAPKGVKTNWVMHEYRLEGKFAIDNLSKTAKNECVISRVFHTRTDGTK).

Mostly expressed in root cortex, phloem, atrichoblast and quiescent center (QC), and, to a lower extent, in root endodermis, xylem, pericycle, columella and lateral root cap (LRC). Expressed in roots, cotyledons, very young leaves, senescing leaves, mature flowers and pollen.

It localises to the nucleus. Functionally, transcription activator that binds to DNA in promoters of target genes on a specific bipartite motif 5'-[AG]CGT[AG](4-5n)[AG][CT]ACGCAA-3'. Triggers the expression of senescence-associated genes during age-, salt- and dark-induced senescence through a regulatory network that may involve cross-talk with salt- and H(2)O(2)-dependent signaling pathways. This Arabidopsis thaliana (Mouse-ear cress) protein is NAC domain-containing protein 59.